The following is a 935-amino-acid chain: Isoleucine--tRNA ligase (935 aa).

The 'HIGH' region signature appears at 58-68; that stretch reads PYANGSIHVGH. Residue Glu558 coordinates L-isoleucyl-5'-AMP. Positions 599–603 match the 'KMSKS' region motif; sequence KMSKS. ATP is bound at residue Lys602. Zn(2+) contacts are provided by Cys897, Cys900, Cys917, and Cys920.

The protein belongs to the class-I aminoacyl-tRNA synthetase family. IleS type 1 subfamily. Monomer. It depends on Zn(2+) as a cofactor.

The protein localises to the cytoplasm. The catalysed reaction is tRNA(Ile) + L-isoleucine + ATP = L-isoleucyl-tRNA(Ile) + AMP + diphosphate. In terms of biological role, catalyzes the attachment of isoleucine to tRNA(Ile). As IleRS can inadvertently accommodate and process structurally similar amino acids such as valine, to avoid such errors it has two additional distinct tRNA(Ile)-dependent editing activities. One activity is designated as 'pretransfer' editing and involves the hydrolysis of activated Val-AMP. The other activity is designated 'posttransfer' editing and involves deacylation of mischarged Val-tRNA(Ile). The sequence is that of Isoleucine--tRNA ligase from Francisella tularensis subsp. holarctica (strain OSU18).